Consider the following 391-residue polypeptide: Acetyl-CoA acetyltransferase (391 aa).

The active-site Acyl-thioester intermediate is the C88. Catalysis depends on proton acceptor residues H347 and C377.

It belongs to the thiolase-like superfamily. Thiolase family. As to quaternary structure, homotetramer.

The protein resides in the cytoplasm. The enzyme catalyses 2 acetyl-CoA = acetoacetyl-CoA + CoA. The protein operates within metabolic intermediate biosynthesis; (R)-mevalonate biosynthesis; (R)-mevalonate from acetyl-CoA: step 1/3. This is Acetyl-CoA acetyltransferase (phaA) from Paracoccus denitrificans.